The sequence spans 415 residues: Probable glucuronosyltransferase Os01g0926600 (415 aa).

Topologically, residues 1-4 are cytoplasmic; it reads MAMR. Residues 5 to 25 traverse the membrane as a helical; Signal-anchor for type II membrane protein segment; it reads LSSAAVALALLLAATALEDVA. Over 26 to 415 the chain is Lumenal; it reads RGQDTERIEG…QGPVGDLKPW (390 aa). N-linked (GlcNAc...) asparagine glycosylation is found at Asn142 and Asn403.

It belongs to the glycosyltransferase 47 family.

It localises to the golgi apparatus membrane. Functionally, involved in the synthesis of glucuronoxylan hemicellulose in secondary cell walls. The chain is Probable glucuronosyltransferase Os01g0926600 from Oryza sativa subsp. japonica (Rice).